Here is a 640-residue protein sequence, read N- to C-terminus: Calpain-5 (640 aa).

The Calpain catalytic domain occupies 26–343 (LFEDPHFPAS…FTDIIKCRLI (318 aa)). Catalysis depends on residues C81, H252, and N284. A domain III region spans residues 344–496 (NTSYLSIHKT…VFTDVPSNCR (153 aa)). In terms of domain architecture, C2 spans 499–617 (RLDEPPRTCW…HSLHLQDRSG (119 aa)).

This sequence belongs to the peptidase C2 family.

Functionally, calcium-regulated non-lysosomal thiol-protease. In Rattus norvegicus (Rat), this protein is Calpain-5 (Capn5).